The following is a 372-amino-acid chain: Glutamate 5-kinase (372 aa).

Lys14 serves as a coordination point for ATP. Substrate-binding residues include Ser54, Asp141, and Asn153. ATP contacts are provided by residues 173–174 (TD) and 215–221 (TGGMLTK). A PUA domain is found at 280 to 358 (AGRLVLDDGA…RDIERLLGYV (79 aa)).

This sequence belongs to the glutamate 5-kinase family.

It is found in the cytoplasm. It carries out the reaction L-glutamate + ATP = L-glutamyl 5-phosphate + ADP. It participates in amino-acid biosynthesis; L-proline biosynthesis; L-glutamate 5-semialdehyde from L-glutamate: step 1/2. Catalyzes the transfer of a phosphate group to glutamate to form L-glutamate 5-phosphate. The sequence is that of Glutamate 5-kinase from Laribacter hongkongensis (strain HLHK9).